Consider the following 134-residue polypeptide: Protein NrdI (134 aa).

This sequence belongs to the NrdI family.

Functionally, probably involved in ribonucleotide reductase function. This chain is Protein NrdI, found in Chromohalobacter salexigens (strain ATCC BAA-138 / DSM 3043 / CIP 106854 / NCIMB 13768 / 1H11).